The chain runs to 385 residues: Tumor protein p53-inducible protein 13 (385 aa).

An N-terminal signal peptide occupies residues 1–27 (MVHPPPPPPRLLLVALVGLLSLREVVA). Residues 28-301 (EPAEEAGTPC…ARGPTPRTEE (274 aa)) lie on the Extracellular side of the membrane. The tract at residues 242–297 (APVSLTTGGPGGNGRSRTEAQMPSGQGNHGGCACPGQVSPAPRAAGPPRVARGPTP) is disordered. Residues 281–297 (PAPRAAGPPRVARGPTP) are compositionally biased toward low complexity. Residues 302–322 (AAWAAMALTFLLVLLTLATLC) form a helical membrane-spanning segment. Residues 323–385 (TRLHRNFRRS…DSGPDSESSD (63 aa)) lie on the Cytoplasmic side of the membrane. Residues 359–369 (SRRIKRSRRRP) are compositionally biased toward basic residues. Residues 359 to 385 (SRRIKRSRRRPLLPPTPDSGPDSESSD) form a disordered region.

The protein localises to the cell membrane. It is found in the cytoplasm. May act as a tumor suppressor. Inhibits tumor cell growth, when overexpressed. The sequence is that of Tumor protein p53-inducible protein 13 (Tp53i13) from Mus musculus (Mouse).